A 618-amino-acid chain; its full sequence is MPVRQLPEQIINRIAAGEVVERPASVVKELVENAIDAGASRIDIFTDGGGRRKIAITDDGGGMTAADLALAVERHATSKLDDEDLLQIRTLGFRGEALPSIGSVARLSITTRHKSEPHAWALQVDCGEKSPVVPAALNQGTRVEVADLFHATPARLKFLKTDRTEAEAIREVVRRLAMARPDIAFTIAGEERAPVTWAAALPGAPGQLTRLGDILGADFRSHAIAVQSARESVAVEGFAAAPALTRANALGQYLFVNGRPVRDKLILGAVRAAYADYLPRDRHPVVALFVTLDPREVDANVHPAKTEVRFRNAGLVRALIIHALKEGLAREGRRTAANDGGATIAAFRPAFAPPRPNPGPMNWDWQRSPSAPAAPVPRDHGADAMPAAAAFSPAAFAEPAQAAFDVGGPRADLRLHEQPAAPDLLDRPLGAARTQLHDTYIVAQTRDGLVIVDQHAAHERIVYERLKASLSAHGVQRQILLIPDIVELDEAIVEALLARTDELASFGLAIESFGPGAVAVRETPSLLGKINAAGLLRDLAEHMEEWGEALPLERRLMHVAATMACHGSVRAGRRLKPEEMNALLREMEETPNSGQCNHGRPTYVELKLADVEKLFGRR.

Belongs to the DNA mismatch repair MutL/HexB family.

Functionally, this protein is involved in the repair of mismatches in DNA. It is required for dam-dependent methyl-directed DNA mismatch repair. May act as a 'molecular matchmaker', a protein that promotes the formation of a stable complex between two or more DNA-binding proteins in an ATP-dependent manner without itself being part of a final effector complex. This is DNA mismatch repair protein MutL from Bradyrhizobium sp. (strain BTAi1 / ATCC BAA-1182).